Here is a 281-residue protein sequence, read N- to C-terminus: Bis(5'-nucleosyl)-tetraphosphatase, symmetrical (281 aa).

This sequence belongs to the Ap4A hydrolase family.

The catalysed reaction is P(1),P(4)-bis(5'-adenosyl) tetraphosphate + H2O = 2 ADP + 2 H(+). In terms of biological role, hydrolyzes diadenosine 5',5'''-P1,P4-tetraphosphate to yield ADP. The polypeptide is Bis(5'-nucleosyl)-tetraphosphatase, symmetrical (Acidovorax ebreus (strain TPSY) (Diaphorobacter sp. (strain TPSY))).